The chain runs to 301 residues: 1,5-anhydro-D-fructose reductase (301 aa).

Asp35 serves as a coordination point for NADP(+). Tyr40 (proton donor) is an active-site residue. Substrate is bound at residue His102. Residues Gln175 and Ile246–Asn258 contribute to the NADP(+) site.

This sequence belongs to the aldo/keto reductase family. Monomer.

It localises to the cytoplasm. The enzyme catalyses 1,5-anhydro-D-glucitol + NADP(+) = 1,5-anhydro-D-fructose + NADPH + H(+). With respect to regulation, inhibited by p-chloromercuribenzoic acid and alkyliodines. Catalyzes the NADPH-dependent reduction of 1,5-anhydro-D-fructose (AF) to 1,5-anhydro-D-glucitol. The polypeptide is 1,5-anhydro-D-fructose reductase (Akr1e2) (Mus musculus (Mouse)).